The sequence spans 179 residues: ATP synthase subunit delta (179 aa).

The protein belongs to the ATPase delta chain family. As to quaternary structure, F-type ATPases have 2 components, F(1) - the catalytic core - and F(0) - the membrane proton channel. F(1) has five subunits: alpha(3), beta(3), gamma(1), delta(1), epsilon(1). F(0) has three main subunits: a(1), b(2) and c(10-14). The alpha and beta chains form an alternating ring which encloses part of the gamma chain. F(1) is attached to F(0) by a central stalk formed by the gamma and epsilon chains, while a peripheral stalk is formed by the delta and b chains.

It is found in the cell membrane. F(1)F(0) ATP synthase produces ATP from ADP in the presence of a proton or sodium gradient. F-type ATPases consist of two structural domains, F(1) containing the extramembraneous catalytic core and F(0) containing the membrane proton channel, linked together by a central stalk and a peripheral stalk. During catalysis, ATP synthesis in the catalytic domain of F(1) is coupled via a rotary mechanism of the central stalk subunits to proton translocation. Its function is as follows. This protein is part of the stalk that links CF(0) to CF(1). It either transmits conformational changes from CF(0) to CF(1) or is implicated in proton conduction. This is ATP synthase subunit delta from Bacillus sp. (strain PS3).